Here is a 250-residue protein sequence, read N- to C-terminus: Capsid protein (250 aa).

The tract at residues Met-1–Lys-31 is disordered. The short motif at Lys-3 to Ser-19 is the Bipartite nuclear localization signal element. The segment covering Ser-14–Lys-31 has biased composition (polar residues). Positions Lys-34–Arg-48 match the Nuclear localization signal motif. A zinc finger lies at Tyr-53–Ser-70. Positions Ile-95 to Met-116 match the Nuclear export signal motif. The short motif at Arg-194–Arg-241 is the Bipartite nuclear localization signal element.

The protein belongs to the geminiviridae capsid protein family. Homomultimer. Binds to single-stranded and double-stranded viral DNA. Interacts (via nuclear localization signals) with host importin alpha-1a.

The protein localises to the virion. The protein resides in the host nucleus. Encapsidates the viral DNA into characteristic twinned ('geminate') particles. Binds the genomic viral ssDNA and shuttles it into and out of the cell nucleus. The CP of bipartite geminiviruses is not required for cell-to-cell or systemic movement. This is Capsid protein from Bean golden yellow mosaic virus (isolate Puerto Rico) (BGYMV).